The primary structure comprises 63 residues: Large ribosomal subunit protein bL35 (63 aa).

The protein belongs to the bacterial ribosomal protein bL35 family.

The sequence is that of Large ribosomal subunit protein bL35 from Campylobacter jejuni subsp. jejuni serotype O:2 (strain ATCC 700819 / NCTC 11168).